Consider the following 1432-residue polypeptide: Gag-Pol polyprotein (1432 aa).

Residue glycine 2 is the site of N-myristoyl glycine; by host attachment. The interval 7–31 is interaction with Gp41; sequence VLSGGKLDTWERIRLRPGGKKKYAL. Residues 8-43 form an interaction with host CALM1 region; that stretch reads LSGGKLDTWERIRLRPGGKKKYALKHLIWASRELER. The segment at 12–19 is interaction with host AP3D1; the sequence is KLDTWERI. The tract at residues 14 to 33 is interaction with membrane phosphatidylinositol 4,5-bisphosphate and RNA; it reads DTWERIRLRPGGKKKYALKH. Residues 16–22 carry the Nuclear export signal motif; it reads WERIRLR. Residues 26–32 carry the Nuclear localization signal motif; that stretch reads KKKYALK. The tract at residues 73–77 is interaction with membrane phosphatidylinositol 4,5-bisphosphate; sequence EEIRS. The segment at 102–125 is disordered; it reads EKMEEEQNKSKKKTQQAAADSSQV. The segment covering 116 to 125 has biased composition (low complexity); sequence QQAAADSSQV. Tyrosine 129 is modified (phosphotyrosine; by host). Positions 186-224 are interaction with human PPIA/CYPA and NUP153; it reads NTVGGHQAAMQMLKETINDEAAEWDRLHPVHAGPVAPGQ. The tract at residues 274 to 360 is dimerization/Multimerization of capsid protein p24; the sequence is YSPVSILDIR…GGPGHKARVL (87 aa). 2 CCHC-type zinc fingers span residues 388–405 and 409–426; these read IKCF…NCRA and KGCW…DCTE. Residues 486-490 form a dimerization of protease region; sequence PQITL. The 70-residue stretch at 505–574 folds into the Peptidase A2 domain; sequence KEALLDTGAD…TPVNIIGRNL (70 aa). Aspartate 510 (for protease activity; shared with dimeric partner) is an active-site residue. Dimerization of protease stretches follow at residues 534 to 540 and 573 to 585; these read GIGGFIK and NLLT…LNFP. The Reverse transcriptase domain maps to 628 to 818; it reads EGKISRIGPE…PPFLWMGYEL (191 aa). Mg(2+) is bound by residues aspartate 694, aspartate 769, and aspartate 770. Residues 811–819 form an RT 'primer grip' region; sequence FLWMGYELH. The short motif at 982–998 is the Tryptophan repeat motif element; the sequence is WETWWIEYWQATWIPEW. The region spanning 1018 to 1141 is the RNase H type-1 domain; that stretch reads IIGAETFYVD…VDKLVSQGIR (124 aa). Mg(2+) contacts are provided by aspartate 1027, glutamate 1062, aspartate 1082, and aspartate 1133. The Integrase-type zinc-finger motif lies at 1147 to 1188; that stretch reads DGIDKAQEEHEKYHNNWRAMASDFNLPPVVAKEIVASCDKCQ. Residues histidine 1156, histidine 1160, cysteine 1184, and cysteine 1187 each contribute to the Zn(2+) site. Positions 1198 to 1348 constitute an Integrase catalytic domain; it reads VDCSPGIWQL…SAGERIIDII (151 aa). Residues aspartate 1208, aspartate 1260, and glutamate 1296 each coordinate Mg(2+). Positions 1367–1414 form a DNA-binding region, integrase-type; the sequence is FRVYYRDSRDPIWKGPAKLLWKGEGAVVIQDNSDIKVVPRRKVKIIRD.

As to quaternary structure, homotrimer; further assembles as hexamers of trimers. Interacts with gp41 (via C-terminus). Interacts with host CALM1; this interaction induces a conformational change in the Matrix protein, triggering exposure of the myristate group. Interacts with host AP3D1; this interaction allows the polyprotein trafficking to multivesicular bodies during virus assembly. Part of the pre-integration complex (PIC) which is composed of viral genome, matrix protein, Vpr and integrase. Homodimer; the homodimer further multimerizes as homohexamers or homopentamers. Interacts with human PPIA/CYPA; This interaction stabilizes the capsid. Interacts with human NUP153. Interacts with host PDZD8; this interaction stabilizes the capsid. Interacts with monkey TRIM5; this interaction destabilizes the capsid. In terms of assembly, homodimer, whose active site consists of two apposed aspartic acid residues. As to quaternary structure, heterodimer of p66 RT and p51 RT (RT p66/p51). Heterodimerization of RT is essential for DNA polymerase activity. The overall folding of the subdomains is similar in p66 RT and p51 RT but the spatial arrangements of the subdomains are dramatically different. Homotetramer; may further associate as a homohexadecamer. Part of the pre-integration complex (PIC) which is composed of viral genome, matrix protein, Vpr and integrase. Interacts with human SMARCB1/INI1 and human PSIP1/LEDGF isoform 1. Interacts with human KPNA3; this interaction might play a role in nuclear import of the pre-integration complex. Interacts with human NUP153; this interaction might play a role in nuclear import of the pre-integration complex. The cofactor is Mg(2+). Specific enzymatic cleavages by the viral protease yield mature proteins. The protease is released by autocatalytic cleavage. The polyprotein is cleaved during and after budding, this process is termed maturation. Proteolytic cleavage of p66 RT removes the RNase H domain to yield the p51 RT subunit. Nucleocapsid protein p7 might be further cleaved after virus entry. In terms of processing, tyrosine phosphorylated presumably in the virion by a host kinase. Phosphorylation is apparently not a major regulator of membrane association. Post-translationally, phosphorylated possibly by host MAPK1; this phosphorylation is necessary for Pin1-mediated virion uncoating. Methylated by host PRMT6, impairing its function by reducing RNA annealing and the initiation of reverse transcription.

It localises to the host cell membrane. It is found in the host endosome. Its subcellular location is the host multivesicular body. The protein resides in the virion membrane. The protein localises to the host nucleus. It localises to the host cytoplasm. It is found in the virion. It carries out the reaction Specific for a P1 residue that is hydrophobic, and P1' variable, but often Pro.. The catalysed reaction is Endohydrolysis of RNA in RNA/DNA hybrids. Three different cleavage modes: 1. sequence-specific internal cleavage of RNA. Human immunodeficiency virus type 1 and Moloney murine leukemia virus enzymes prefer to cleave the RNA strand one nucleotide away from the RNA-DNA junction. 2. RNA 5'-end directed cleavage 13-19 nucleotides from the RNA end. 3. DNA 3'-end directed cleavage 15-20 nucleotides away from the primer terminus.. The enzyme catalyses 3'-end directed exonucleolytic cleavage of viral RNA-DNA hybrid.. It catalyses the reaction DNA(n) + a 2'-deoxyribonucleoside 5'-triphosphate = DNA(n+1) + diphosphate. Its activity is regulated as follows. The viral protease is inhibited by many synthetic protease inhibitors (PIs), such as amprenavir, atazanavir, indinavir, loprinavir, nelfinavir, ritonavir and saquinavir. RT can be inhibited either by nucleoside RT inhibitors (NRTIs) or by non nucleoside RT inhibitors (NNRTIs). NRTIs act as chain terminators, whereas NNRTIs inhibit DNA polymerization by binding a small hydrophobic pocket near the RT active site and inducing an allosteric change in this region. Classical NRTIs are abacavir, adefovir (PMEA), didanosine (ddI), lamivudine (3TC), stavudine (d4T), tenofovir (PMPA), zalcitabine (ddC), and zidovudine (AZT). Classical NNRTIs are atevirdine (BHAP U-87201E), delavirdine, efavirenz (DMP-266), emivirine (I-EBU), and nevirapine (BI-RG-587). The tritherapies used as a basic effective treatment of AIDS associate two NRTIs and one NNRTI. Use of protease inhibitors in tritherapy regimens permit more ambitious therapeutic strategies. Gag-Pol polyprotein and Gag polyprotein may regulate their own translation, by the binding genomic RNA in the 5'-UTR. At low concentration, Gag-Pol and Gag would promote translation, whereas at high concentration, the polyproteins encapsidate genomic RNA and then shut off translation. Functionally, matrix protein p17 targets Gag and Gag-pol polyproteins to the plasma membrane via a multipartite membrane-binding signal, that includes its myristoylated N-terminus. Matrix protein is part of the pre-integration complex. Implicated in the release from host cell mediated by Vpu. Binds to RNA. Its function is as follows. Forms the conical core that encapsulates the genomic RNA-nucleocapsid complex in the virion. Most core are conical, with only 7% tubular. The core is constituted by capsid protein hexamer subunits. The core is disassembled soon after virion entry. Host restriction factors such as TRIM5-alpha or TRIMCyp bind retroviral capsids and cause premature capsid disassembly, leading to blocks in reverse transcription. Capsid restriction by TRIM5 is one of the factors which restricts HIV-1 to the human species. Host PIN1 apparently facilitates the virion uncoating. On the other hand, interactions with PDZD8 or CYPA stabilize the capsid. In terms of biological role, nucleocapsid protein p7 encapsulates and protects viral dimeric unspliced genomic RNA (gRNA). Binds these RNAs through its zinc fingers. Acts as a nucleic acid chaperone which is involved in rearangement of nucleic acid secondary structure during gRNA retrotranscription. Also facilitates template switch leading to recombination. As part of the polyprotein, participates in gRNA dimerization, packaging, tRNA incorporation and virion assembly. The aspartyl protease mediates proteolytic cleavages of Gag and Gag-Pol polyproteins during or shortly after the release of the virion from the plasma membrane. Cleavages take place as an ordered, step-wise cascade to yield mature proteins. This process is called maturation. Displays maximal activity during the budding process just prior to particle release from the cell. Also cleaves Nef and Vif, probably concomitantly with viral structural proteins on maturation of virus particles. Hydrolyzes host EIF4GI and PABP1 in order to shut off the capped cellular mRNA translation. The resulting inhibition of cellular protein synthesis serves to ensure maximal viral gene expression and to evade host immune response. Also mediates cleavage of host YTHDF3. Mediates cleavage of host CARD8, thereby activating the CARD8 inflammasome, leading to the clearance of latent HIV-1 in patient CD4(+) T-cells after viral reactivation; in contrast, HIV-1 can evade CARD8-sensing when its protease remains inactive in infected cells prior to viral budding. Functionally, reverse transcriptase/ribonuclease H (RT) is a multifunctional enzyme that converts the viral RNA genome into dsDNA in the cytoplasm, shortly after virus entry into the cell. This enzyme displays a DNA polymerase activity that can copy either DNA or RNA templates, and a ribonuclease H (RNase H) activity that cleaves the RNA strand of RNA-DNA heteroduplexes in a partially processive 3' to 5' endonucleasic mode. Conversion of viral genomic RNA into dsDNA requires many steps. A tRNA(3)-Lys binds to the primer-binding site (PBS) situated at the 5'-end of the viral RNA. RT uses the 3' end of the tRNA primer to perform a short round of RNA-dependent minus-strand DNA synthesis. The reading proceeds through the U5 region and ends after the repeated (R) region which is present at both ends of viral RNA. The portion of the RNA-DNA heteroduplex is digested by the RNase H, resulting in a ssDNA product attached to the tRNA primer. This ssDNA/tRNA hybridizes with the identical R region situated at the 3' end of viral RNA. This template exchange, known as minus-strand DNA strong stop transfer, can be either intra- or intermolecular. RT uses the 3' end of this newly synthesized short ssDNA to perform the RNA-dependent minus-strand DNA synthesis of the whole template. RNase H digests the RNA template except for two polypurine tracts (PPTs) situated at the 5'-end and near the center of the genome. It is not clear if both polymerase and RNase H activities are simultaneous. RNase H probably can proceed both in a polymerase-dependent (RNA cut into small fragments by the same RT performing DNA synthesis) and a polymerase-independent mode (cleavage of remaining RNA fragments by free RTs). Secondly, RT performs DNA-directed plus-strand DNA synthesis using the PPTs that have not been removed by RNase H as primers. PPTs and tRNA primers are then removed by RNase H. The 3' and 5' ssDNA PBS regions hybridize to form a circular dsDNA intermediate. Strand displacement synthesis by RT to the PBS and PPT ends produces a blunt ended, linear dsDNA copy of the viral genome that includes long terminal repeats (LTRs) at both ends. Its function is as follows. Catalyzes viral DNA integration into the host chromosome, by performing a series of DNA cutting and joining reactions. This enzyme activity takes place after virion entry into a cell and reverse transcription of the RNA genome in dsDNA. The first step in the integration process is 3' processing. This step requires a complex comprising the viral genome, matrix protein, Vpr and integrase. This complex is called the pre-integration complex (PIC). The integrase protein removes 2 nucleotides from each 3' end of the viral DNA, leaving recessed CA OH's at the 3' ends. In the second step, the PIC enters cell nucleus. This process is mediated through integrase and Vpr proteins, and allows the virus to infect a non dividing cell. This ability to enter the nucleus is specific of lentiviruses, other retroviruses cannot and rely on cell division to access cell chromosomes. In the third step, termed strand transfer, the integrase protein joins the previously processed 3' ends to the 5' ends of strands of target cellular DNA at the site of integration. The 5'-ends are produced by integrase-catalyzed staggered cuts, 5 bp apart. A Y-shaped, gapped, recombination intermediate results, with the 5'-ends of the viral DNA strands and the 3' ends of target DNA strands remaining unjoined, flanking a gap of 5 bp. The last step is viral DNA integration into host chromosome. This involves host DNA repair synthesis in which the 5 bp gaps between the unjoined strands are filled in and then ligated. Since this process occurs at both cuts flanking the HIV genome, a 5 bp duplication of host DNA is produced at the ends of HIV-1 integration. Alternatively, Integrase may catalyze the excision of viral DNA just after strand transfer, this is termed disintegration. The protein is Gag-Pol polyprotein (gag-pol) of Homo sapiens (Human).